The primary structure comprises 756 residues: 5-methyltetrahydropteroyltriglutamate--homocysteine methyltransferase (756 aa).

5-methyltetrahydropteroyltri-L-glutamate-binding positions include 16 to 19 (RELK) and Lys-116. L-homocysteine contacts are provided by residues 433 to 435 (IGS) and Glu-486. Residues 433–435 (IGS) and Glu-486 each bind L-methionine. 5-methyltetrahydropteroyltri-L-glutamate contacts are provided by residues 517-518 (RC) and Trp-563. Residue Asp-601 coordinates L-homocysteine. Position 601 (Asp-601) interacts with L-methionine. Glu-607 provides a ligand contact to 5-methyltetrahydropteroyltri-L-glutamate. Residues His-643, Cys-645, and Glu-667 each coordinate Zn(2+). His-696 functions as the Proton donor in the catalytic mechanism. Cys-728 is a Zn(2+) binding site.

It belongs to the vitamin-B12 independent methionine synthase family. The cofactor is Zn(2+).

It carries out the reaction 5-methyltetrahydropteroyltri-L-glutamate + L-homocysteine = tetrahydropteroyltri-L-glutamate + L-methionine. Its pathway is amino-acid biosynthesis; L-methionine biosynthesis via de novo pathway; L-methionine from L-homocysteine (MetE route): step 1/1. Its function is as follows. Catalyzes the transfer of a methyl group from 5-methyltetrahydrofolate to homocysteine resulting in methionine formation. This is 5-methyltetrahydropteroyltriglutamate--homocysteine methyltransferase from Buchnera aphidicola subsp. Baizongia pistaciae (strain Bp).